The chain runs to 211 residues: Urease accessory protein UreG (211 aa).

16-23 (GPVGSGKT) lines the GTP pocket.

This sequence belongs to the SIMIBI class G3E GTPase family. UreG subfamily. Homodimer. UreD, UreF and UreG form a complex that acts as a GTP-hydrolysis-dependent molecular chaperone, activating the urease apoprotein by helping to assemble the nickel containing metallocenter of UreC. The UreE protein probably delivers the nickel.

The protein localises to the cytoplasm. Its function is as follows. Facilitates the functional incorporation of the urease nickel metallocenter. This process requires GTP hydrolysis, probably effectuated by UreG. In Janthinobacterium sp. (strain Marseille) (Minibacterium massiliensis), this protein is Urease accessory protein UreG.